Here is a 120-residue protein sequence, read N- to C-terminus: Large ribosomal subunit protein bL19 (120 aa).

This sequence belongs to the bacterial ribosomal protein bL19 family.

Its function is as follows. This protein is located at the 30S-50S ribosomal subunit interface and may play a role in the structure and function of the aminoacyl-tRNA binding site. The sequence is that of Large ribosomal subunit protein bL19 from Rippkaea orientalis (strain PCC 8801 / RF-1) (Cyanothece sp. (strain PCC 8801)).